The primary structure comprises 101 residues: NADH-quinone oxidoreductase subunit K (101 aa).

The next 3 membrane-spanning stretches (helical) occupy residues 4-24 (LAHY…GIFL), 30-50 (IIIL…FVAF), and 61-81 (IFVF…LAIL).

It belongs to the complex I subunit 4L family. NDH-1 is composed of 14 different subunits. Subunits NuoA, H, J, K, L, M, N constitute the membrane sector of the complex.

Its subcellular location is the cell inner membrane. It carries out the reaction a quinone + NADH + 5 H(+)(in) = a quinol + NAD(+) + 4 H(+)(out). In terms of biological role, NDH-1 shuttles electrons from NADH, via FMN and iron-sulfur (Fe-S) centers, to quinones in the respiratory chain. The immediate electron acceptor for the enzyme in this species is believed to be ubiquinone. Couples the redox reaction to proton translocation (for every two electrons transferred, four hydrogen ions are translocated across the cytoplasmic membrane), and thus conserves the redox energy in a proton gradient. The protein is NADH-quinone oxidoreductase subunit K of Paraburkholderia xenovorans (strain LB400).